The sequence spans 528 residues: GTPase Der (528 aa).

Composition is skewed to acidic residues over residues 1 to 12 (MDVEGAFADEEE) and 30 to 62 (GYDD…PDFG). Positions 1–62 (MDVEGAFADE…EDDFAAPDFG (62 aa)) are disordered. EngA-type G domains follow at residues 90–253 (CTVA…PEEP) and 263–436 (RRVA…ENWD). Residues 96 to 103 (GRPNVGKS), 143 to 147 (DTGGW), 205 to 208 (NKFD), 269 to 276 (GKPNVGKS), 316 to 320 (DTAGL), and 381 to 384 (NKWD) contribute to the GTP site. In terms of domain architecture, KH-like spans 437–519 (RRVSTGQLNN…PIRIAVRVRE (83 aa)).

Belongs to the TRAFAC class TrmE-Era-EngA-EngB-Septin-like GTPase superfamily. EngA (Der) GTPase family. In terms of assembly, associates with the 50S ribosomal subunit.

Its function is as follows. GTPase that plays an essential role in the late steps of ribosome biogenesis. The polypeptide is GTPase Der (Corynebacterium efficiens (strain DSM 44549 / YS-314 / AJ 12310 / JCM 11189 / NBRC 100395)).